A 259-amino-acid chain; its full sequence is Protein TILLER ANGLE CONTROL 1 (259 aa).

Positions 56 to 62 match the IGT motif motif; sequence GILAIGT. Disordered stretches follow at residues 96–123, 206–226, and 239–259; these read EEKA…AKMH, SCME…PLKA, and GKKI…PVTA. A compositionally biased stretch (low complexity) spans 109-119; the sequence is APSEPASALEP.

It belongs to the TAC family. In terms of tissue distribution, expressed in the basal part of seedlings.

Its function is as follows. Involved in the regulation of tiller growth angle. Promotes horizontal shoot growth. TAC1 and LAZY1 play opposite functions in the regulation of tiller growth angle. The protein is Protein TILLER ANGLE CONTROL 1 of Oryza sativa subsp. indica (Rice).